The primary structure comprises 198 residues: Probable GTP-binding protein EngB (198 aa).

Residues 36–198 (SDPQFAFIGR…NLSKLQELLE (163 aa)) form the EngB-type G domain. GTP-binding positions include 44–51 (GRSNVGKS), 70–74 (GRTQL), 88–91 (DLPG), 155–158 (NKID), and 182–184 (ISA). Ser-51 and Thr-72 together coordinate Mg(2+).

The protein belongs to the TRAFAC class TrmE-Era-EngA-EngB-Septin-like GTPase superfamily. EngB GTPase family. It depends on Mg(2+) as a cofactor.

Its function is as follows. Necessary for normal cell division and for the maintenance of normal septation. This is Probable GTP-binding protein EngB from Mesomycoplasma hyopneumoniae (strain J / ATCC 25934 / NCTC 10110) (Mycoplasma hyopneumoniae).